We begin with the raw amino-acid sequence, 292 residues long: 4-hydroxy-tetrahydrodipicolinate synthase (292 aa).

Pyruvate is bound at residue T46. Y134 (proton donor/acceptor) is an active-site residue. K162 (schiff-base intermediate with substrate) is an active-site residue. I204 lines the pyruvate pocket.

This sequence belongs to the DapA family. In terms of assembly, homotetramer; dimer of dimers.

It localises to the cytoplasm. It carries out the reaction L-aspartate 4-semialdehyde + pyruvate = (2S,4S)-4-hydroxy-2,3,4,5-tetrahydrodipicolinate + H2O + H(+). It participates in amino-acid biosynthesis; L-lysine biosynthesis via DAP pathway; (S)-tetrahydrodipicolinate from L-aspartate: step 3/4. Functionally, catalyzes the condensation of (S)-aspartate-beta-semialdehyde [(S)-ASA] and pyruvate to 4-hydroxy-tetrahydrodipicolinate (HTPA). This Moorella thermoacetica (strain ATCC 39073 / JCM 9320) protein is 4-hydroxy-tetrahydrodipicolinate synthase.